The primary structure comprises 303 residues: Acetaldehyde dehydrogenase (303 aa).

Residue 13 to 16 (SGNI) coordinates NAD(+). C128 serves as the catalytic Acyl-thioester intermediate. NAD(+)-binding positions include 159–167 (SAGPGTRQN) and N278.

This sequence belongs to the acetaldehyde dehydrogenase family.

It catalyses the reaction acetaldehyde + NAD(+) + CoA = acetyl-CoA + NADH + H(+). This chain is Acetaldehyde dehydrogenase, found in Chloroflexus aggregans (strain MD-66 / DSM 9485).